We begin with the raw amino-acid sequence, 654 residues long: MAPHNCDRELIDLIHNFFLRSTLLICSSKLNKNQHLLEEIQKFDSDLNEKPDLPKTINEWFHDENERNLPPLVIETLLDLKKLSPNHFVTLRDDDGNVWNVCKGTKKSEIVLERWLIELDNTSAAFQSYRGTIDSTGEIRKQIVLLARYLVTLIQILPSNELEENLTKNSTNLILSLKRKVIDGSKPILSKGRIGLSKPIISTYSNVINERNIPPHLEQRKITPVYTPLGLLRISVSFRHDCRFEVNQSTDSSDNVASNTTNIHQHLEPLHNKNYTNTSLSISPHSHIALASSSERNSIGKKDLNSKPIHPFKTGSVGSCTINQSQAMIRTTSNPSVIATLRAQRSRNDSISCQSQLEDIQLESTSVGSGSKYSSSFGRIRRHSSVKSSENVEKPIRLVKQSNAPTDDLLDFVKMMDEKQELRITKCNISSNNADISNSILRFQKLKSSNEILSEDLSMSVSLEGVNASMHRRSSVSHSPIPSVSPPVQYPSIPSRLSKTNLQEQDTFKTAVVSRRNSVEKSKINISQPKTTGRIENELVDKPLFNEEHESKGEELLASGIIGPSFKRSTSPHSIESVSSLISKTKIAFQQPSYYSHPTTAAVPAYAKLHRPSVLSTDVLSEDQNKKVVQDLNNNKDEDDELLFFMSDMNLSKI.

It belongs to the ATG13 family. Fungi subfamily. In terms of assembly, interacts with ATG1 to form the ATG1-ATG13 kinase complex.

The protein localises to the cytoplasm. It localises to the preautophagosomal structure. Functionally, activates the ATG1 kinase in a nutritional condition dependent manner through the TOR pathway, leading to autophagy. Also involved in cytoplasm to vacuole transport (Cvt) and more specifically in Cvt vesicle formation. Seems to play a role in the switching machinery regulating the conversion between the Cvt pathway and autophagy. Finally, ATG13 is also required for glycogen storage during stationary phase. The chain is Autophagy-related protein 13 (ATG13) from Vanderwaltozyma polyspora (strain ATCC 22028 / DSM 70294 / BCRC 21397 / CBS 2163 / NBRC 10782 / NRRL Y-8283 / UCD 57-17) (Kluyveromyces polysporus).